Reading from the N-terminus, the 141-residue chain is MERLQGLLLWLLLSPSVVWASRGPLRPLCRPVNATLAAENEFCPVCITFTTSICAGYCPSMVRVLPAALPPVPQPVCTYRELAFASVRLPGCPPGVDPIVSFPVALSCRCGPCRLSSSDCGGPRTQPMACDLPHLPGLLLL.

Positions 1-20 (MERLQGLLLWLLLSPSVVWA) are cleaved as a signal peptide. Disulfide bonds link C29–C77, C43–C92, C54–C108, C58–C110, and C113–C120. N-linked (GlcNAc...) asparagine glycosylation occurs at N33.

The protein belongs to the glycoprotein hormones subunit beta family. Heterodimer of a common alpha chain and a unique beta chain which confers biological specificity to thyrotropin, lutropin, follitropin and gonadotropin.

It localises to the secreted. Functionally, promotes spermatogenesis and ovulation by stimulating the testes and ovaries to synthesize steroids. This Mus musculus (Mouse) protein is Lutropin subunit beta (Lhb).